Here is a 770-residue protein sequence, read N- to C-terminus: Protein argonaute (770 aa).

Residues 1 to 151 (MKAKVVINLV…VIHIIHQIQS (151 aa)) are N-terminal domain. One can recognise a PAZ domain in the interval 154 to 272 (TLWELVNKDP…LLPQLVVPTY (119 aa)). An interdomain connector region spans residues 276–361 (QLESDVAKEI…SQLLLWTNYS (86 aa)). Residues 362 to 544 (RKYPVILPYE…LSKLGVKYYV (183 aa)) form a mid domain region. The Piwi domain occupies 473–756 (GLAFIAARNK…FANAIRNEWK (284 aa)). Catalysis depends on residues aspartate 558, glutamate 596, aspartate 628, and histidine 745. A Mn(2+)-binding site is contributed by aspartate 558. Mn(2+) is bound by residues aspartate 628, histidine 745, and valine 770.

This sequence belongs to the argonaute family. Long pAgo subfamily. As to quaternary structure, monomer. Requires Mn(2+) as cofactor.

Inhibited at greater than 500 mM NaCl. Its function is as follows. A DNA-guided ssDNA endonuclease that may play a role in defense against invading mobile genetic elements. Uses short 5'-phospho-ssDNA sequences as guides (gDNA) to bind complementary target strands, resulting in cleavage of the target DNA (tDNA). Endonucleolytically cleaves DNA in short dsDNA (the gDNA indicates where to cleave on the tDNA). Efficient guide-dependent target DNA cleavage requires a minimal gDNA length of 15 nucleotides (nt) and works up to at least 31 nt. Overexpression decreases plasmid transformation efficiency. Has no appreciable activity with gRNA or on target RNA. Also has guide-independent activity on plasmid DNA called 'chopping'. The cleavage site is 10 nucleotides (nt) downstream of the target residue base-paired with the 5'-end of the gDNA, cleavage is insensitive to adenine methylation. DNA cleavage produces 5'-phosphomonoesters (as it can be ligated by T4 DNA ligase). In Pyrococcus furiosus (strain ATCC 43587 / DSM 3638 / JCM 8422 / Vc1), this protein is Protein argonaute.